The chain runs to 228 residues: Probable C4-dicarboxylate response regulator DctR (228 aa).

A Response regulatory domain is found at 7–123 (TVLLIEDDPM…RMKQALEQYR (117 aa)). D58 is modified (4-aspartylphosphate). The H-T-H motif DNA-binding region spans 180-199 (AEEVADGVGIARVTARRYLE).

Post-translationally, phosphorylated by DctS.

It is found in the cytoplasm. Functionally, member of the two-component regulatory system DctS/DctR. Essential for expression of DctP. This is Probable C4-dicarboxylate response regulator DctR (dctR) from Priestia megaterium (Bacillus megaterium).